Consider the following 106-residue polypeptide: MGKTNDWLDFDQLAEEKVRDALKPPSMYKVILVNDDYTPMEFVIDVLQKFFSYDVERATQLMLAVHYQGKAICGVFTAEVAETKVAMVNKYARENEHPLLCTLEKA.

Belongs to the ClpS family. In terms of assembly, binds to the N-terminal domain of the chaperone ClpA.

Its function is as follows. Involved in the modulation of the specificity of the ClpAP-mediated ATP-dependent protein degradation. The sequence is that of ATP-dependent Clp protease adapter protein ClpS from Escherichia coli O139:H28 (strain E24377A / ETEC).